Reading from the N-terminus, the 583-residue chain is Interactor of constitutive active ROPs 2, chloroplastic (583 aa).

The transit peptide at 1-55 (MQTPKPRPGSLEVPQKKSPASTPKTARKLKTSESDPVSSPNTKIRTPKTQSPKVV) directs the protein to the chloroplast. 2 disordered regions span residues 1 to 80 (MQTP…PELA) and 101 to 125 (EALK…NASE). Over residues 34–52 (SDPVSSPNTKIRTPKTQSP) the composition is skewed to polar residues. Coiled coils occupy residues 74-207 (GKTP…DAKE) and 238-516 (MKMS…AAAT). Over residues 102–115 (ALKKEAQDQAEETK) the composition is skewed to basic and acidic residues. The interval 518 to 583 (LSGGNNNNNS…IGVLLKKSQK (66 aa)) is disordered. Residues 519–529 (SGGNNNNNSNG) are compositionally biased toward low complexity. Serine 540 is modified (phosphoserine).

It belongs to the ICR family. As to quaternary structure, interacts with ARAC8, ARAC11 and KIN13A in vitro, but not with ICR1 or SEC3A.

The protein localises to the plastid. Its subcellular location is the chloroplast. Its function is as follows. Acts as a scaffold, mediating interaction of ROPs with different proteins. This is Interactor of constitutive active ROPs 2, chloroplastic (ICR2) from Arabidopsis thaliana (Mouse-ear cress).